Here is a 262-residue protein sequence, read N- to C-terminus: Aminoglycoside (3'') (9) adenylyltransferase (262 aa).

The segment at 1–157 (MTLSIPPSIQ…ERAERLFTPA (157 aa)) is adenylyltransferase domain. ATP-binding residues include Ser36, Ser46, and Asp47. 3 residues coordinate Mg(2+): Asp47, Asp49, and Glu87. The active-site Proton acceptor is Glu87. Residue Asp130 coordinates ATP. Residues 158 to 262 (PAAQLLKALR…AKAHIPTQFT (105 aa)) are helical domain. Streptomycin contacts are provided by residues 173-178 (WQSTAD) and His185. Residues Lys205 and Tyr231 each coordinate ATP.

As to quaternary structure, monomer.

The enzyme catalyses streptomycin + ATP = 3''-O-adenylylstreptomycin + diphosphate. It catalyses the reaction spectinomycin + ATP = 9-O-adenylylspectinomycin + diphosphate. Its function is as follows. Mediates bacterial resistance to the antibiotics streptomycin and spectinomycin, does not confer resistance to kanamycin. Binds ATP first, then antibiotic. The chain is Aminoglycoside (3'') (9) adenylyltransferase (aadA) from Salmonella typhimurium (strain LT2 / SGSC1412 / ATCC 700720).